A 273-amino-acid chain; its full sequence is Undecaprenyl-diphosphatase (273 aa).

A run of 8 helical transmembrane segments spans residues 13–35 (GLVE…VFGN), 45–62 (VFEI…VFEY), 82–102 (FVLN…LFGK), 108–128 (LFNP…ILWV), 144–164 (ALRP…LIPG), 186–206 (TEFS…YDVL), 219–239 (LILI…KALL), and 250–270 (FAYY…SGWI).

This sequence belongs to the UppP family.

The protein localises to the cell inner membrane. It carries out the reaction di-trans,octa-cis-undecaprenyl diphosphate + H2O = di-trans,octa-cis-undecaprenyl phosphate + phosphate + H(+). Its function is as follows. Catalyzes the dephosphorylation of undecaprenyl diphosphate (UPP). Confers resistance to bacitracin. This is Undecaprenyl-diphosphatase from Neisseria meningitidis serogroup C (strain 053442).